The chain runs to 130 residues: Small ribosomal subunit protein uS9 (130 aa).

Belongs to the universal ribosomal protein uS9 family.

This chain is Small ribosomal subunit protein uS9, found in Streptococcus thermophilus (strain CNRZ 1066).